Consider the following 1847-residue polypeptide: Replication factor C small subunit (1847 aa).

DOD-type homing endonuclease domains are found at residues 179–311, 780–927, and 1348–1508; these read WLGY…RFGI, MLGL…ISGI, and LLGF…EFEV.

The protein belongs to the activator 1 small subunits family. RfcS subfamily. In terms of assembly, heteromultimer composed of small subunits (RfcS) and large subunits (RfcL). Post-translationally, this protein undergoes a protein self splicing that involves a post-translational excision of the intervening region (intein) followed by peptide ligation.

In terms of biological role, part of the RFC clamp loader complex which loads the PCNA sliding clamp onto DNA. The sequence is that of Replication factor C small subunit (rfcS) from Methanocaldococcus jannaschii (strain ATCC 43067 / DSM 2661 / JAL-1 / JCM 10045 / NBRC 100440) (Methanococcus jannaschii).